The chain runs to 766 residues: FYVE, RhoGEF and PH domain-containing protein 4 (766 aa).

Residues 1 to 150 (MEESNPAPTS…SSVTNSHDEN (150 aa)) are actin filament-binding. Polar residues-rich tracts occupy residues 43 to 65 (STMNLNIPQTPRQHGLTSTTPQK), 132 to 145 (RNETTTDSASSVTN), and 152 to 161 (CDSSCRTQGT). The interval 43 to 167 (STMNLNIPQT…TQGTDLGLPS (125 aa)) is disordered. Residues 206–393 (KLHKIATELL…STAASHSNSA (188 aa)) form the DH domain. A PH 1 domain is found at 422–521 (ELIKEGQILK…WIKALQESID (100 aa)). An FYVE-type zinc finger spans residues 559–619 (DNEVTMCMKC…VCKDCYQIMS (61 aa)). Residues cysteine 565, cysteine 568, cysteine 582, cysteine 585, cysteine 590, cysteine 593, cysteine 611, and cysteine 614 each contribute to the Zn(2+) site. The PH 2 domain maps to 643-740 (NSEVCSFLQY…WLKIILLAVT (98 aa)). Phosphoserine occurs at positions 702 and 716. The tract at residues 745–766 (DGPSEHLDTLDNLPGPKEKSEC) is disordered.

In terms of assembly, homooligomer. In terms of tissue distribution, detected in brain, lung, liver, skeletal muscle, kidney, testis and cultured hippocampal neurons.

Its subcellular location is the cytoplasm. The protein resides in the cytoskeleton. It is found in the cell projection. It localises to the filopodium. In terms of biological role, activates CDC42, a member of the Ras-like family of Rho- and Rac proteins, by exchanging bound GDP for free GTP. Plays a role in regulating the actin cytoskeleton and cell shape. Activates MAPK8. This is FYVE, RhoGEF and PH domain-containing protein 4 (Fgd4) from Rattus norvegicus (Rat).